A 356-amino-acid polypeptide reads, in one-letter code: Histidine biosynthesis bifunctional protein HisB (356 aa).

A histidinol-phosphatase region spans residues 1–166; sequence MSKKVLFIDR…AICNYLTSLN (166 aa). Aspartate 9 serves as the catalytic Nucleophile. Aspartate 9 and aspartate 11 together coordinate Mg(2+). Residue aspartate 11 is the Proton donor of the active site. Residues cysteine 93, histidine 95, cysteine 101, and cysteine 103 each contribute to the Zn(2+) site. Aspartate 130 lines the Mg(2+) pocket. Residues 167-356 form an imidazoleglycerol-phosphate dehydratase region; it reads RYAHVKRITK…VLPSSKGVLS (190 aa).

It in the N-terminal section; belongs to the histidinol-phosphatase family. In the C-terminal section; belongs to the imidazoleglycerol-phosphate dehydratase family. Mg(2+) serves as cofactor. Zn(2+) is required as a cofactor.

Its subcellular location is the cytoplasm. The catalysed reaction is D-erythro-1-(imidazol-4-yl)glycerol 3-phosphate = 3-(imidazol-4-yl)-2-oxopropyl phosphate + H2O. The enzyme catalyses L-histidinol phosphate + H2O = L-histidinol + phosphate. The protein operates within amino-acid biosynthesis; L-histidine biosynthesis; L-histidine from 5-phospho-alpha-D-ribose 1-diphosphate: step 6/9. It participates in amino-acid biosynthesis; L-histidine biosynthesis; L-histidine from 5-phospho-alpha-D-ribose 1-diphosphate: step 8/9. The sequence is that of Histidine biosynthesis bifunctional protein HisB from Baumannia cicadellinicola subsp. Homalodisca coagulata.